We begin with the raw amino-acid sequence, 272 residues long: D-aminoacyl-tRNA deacylase (272 aa).

This sequence belongs to the DtdA deacylase family. Monomer. Requires Zn(2+) as cofactor.

The catalysed reaction is a D-aminoacyl-tRNA + H2O = a tRNA + a D-alpha-amino acid + H(+). The enzyme catalyses glycyl-tRNA(Ala) + H2O = tRNA(Ala) + glycine + H(+). In terms of biological role, D-aminoacyl-tRNA deacylase with broad substrate specificity. By recycling D-aminoacyl-tRNA to D-amino acids and free tRNA molecules, this enzyme counteracts the toxicity associated with the formation of D-aminoacyl-tRNA entities in vivo. In Desulfurococcus amylolyticus (strain DSM 18924 / JCM 16383 / VKM B-2413 / 1221n) (Desulfurococcus kamchatkensis), this protein is D-aminoacyl-tRNA deacylase.